The following is a 127-amino-acid chain: Small ribosomal subunit protein uS11 (127 aa).

Belongs to the universal ribosomal protein uS11 family. Part of the 30S ribosomal subunit.

Located on the platform of the 30S subunit. The polypeptide is Small ribosomal subunit protein uS11 (Halobacterium salinarum (strain ATCC 700922 / JCM 11081 / NRC-1) (Halobacterium halobium)).